A 196-amino-acid chain; its full sequence is Phosphoheptose isomerase (196 aa).

The SIS domain maps to 36-196 (MAQALQAEGK…LIDQHLFGGA (161 aa)). 51 to 53 (NGG) provides a ligand contact to substrate. Zn(2+)-binding residues include His60 and Glu64. Residues Glu64, 93–94 (ND), 119–121 (STS), Ser124, and Gln174 contribute to the substrate site. Zn(2+) is bound by residues Gln174 and His182.

The protein belongs to the SIS family. GmhA subfamily. In terms of assembly, homotetramer. Zn(2+) serves as cofactor.

It localises to the cytoplasm. The enzyme catalyses 2 D-sedoheptulose 7-phosphate = D-glycero-alpha-D-manno-heptose 7-phosphate + D-glycero-beta-D-manno-heptose 7-phosphate. It functions in the pathway carbohydrate biosynthesis; D-glycero-D-manno-heptose 7-phosphate biosynthesis; D-glycero-alpha-D-manno-heptose 7-phosphate and D-glycero-beta-D-manno-heptose 7-phosphate from sedoheptulose 7-phosphate: step 1/1. Catalyzes the isomerization of sedoheptulose 7-phosphate in D-glycero-D-manno-heptose 7-phosphate. The chain is Phosphoheptose isomerase from Alkalilimnicola ehrlichii (strain ATCC BAA-1101 / DSM 17681 / MLHE-1).